The primary structure comprises 199 residues: Dephospho-CoA kinase (199 aa).

The DPCK domain occupies Lys2–Lys199. Residue Ser10–Ser15 participates in ATP binding.

Belongs to the CoaE family.

It localises to the cytoplasm. The catalysed reaction is 3'-dephospho-CoA + ATP = ADP + CoA + H(+). It functions in the pathway cofactor biosynthesis; coenzyme A biosynthesis; CoA from (R)-pantothenate: step 5/5. Functionally, catalyzes the phosphorylation of the 3'-hydroxyl group of dephosphocoenzyme A to form coenzyme A. The protein is Dephospho-CoA kinase of Desulfotalea psychrophila (strain LSv54 / DSM 12343).